Consider the following 187-residue polypeptide: Peptidyl-tRNA hydrolase (187 aa).

Tyrosine 15 contacts tRNA. Histidine 20 (proton acceptor) is an active-site residue. Positions 64, 66, and 112 each coordinate tRNA.

This sequence belongs to the PTH family. As to quaternary structure, monomer.

It localises to the cytoplasm. The catalysed reaction is an N-acyl-L-alpha-aminoacyl-tRNA + H2O = an N-acyl-L-amino acid + a tRNA + H(+). Functionally, hydrolyzes ribosome-free peptidyl-tRNAs (with 1 or more amino acids incorporated), which drop off the ribosome during protein synthesis, or as a result of ribosome stalling. Its function is as follows. Catalyzes the release of premature peptidyl moieties from peptidyl-tRNA molecules trapped in stalled 50S ribosomal subunits, and thus maintains levels of free tRNAs and 50S ribosomes. The protein is Peptidyl-tRNA hydrolase of Bacteroides fragilis (strain ATCC 25285 / DSM 2151 / CCUG 4856 / JCM 11019 / LMG 10263 / NCTC 9343 / Onslow / VPI 2553 / EN-2).